We begin with the raw amino-acid sequence, 335 residues long: tRNA N6-adenosine threonylcarbamoyltransferase (335 aa).

The Fe cation site is built by His110 and His114. Substrate is bound by residues 132 to 136 (LVSGG), Asp165, Gly178, and Asn271. Residue Asp299 participates in Fe cation binding.

The protein belongs to the KAE1 / TsaD family. Fe(2+) serves as cofactor.

It localises to the cytoplasm. The enzyme catalyses L-threonylcarbamoyladenylate + adenosine(37) in tRNA = N(6)-L-threonylcarbamoyladenosine(37) in tRNA + AMP + H(+). In terms of biological role, required for the formation of a threonylcarbamoyl group on adenosine at position 37 (t(6)A37) in tRNAs that read codons beginning with adenine. Is involved in the transfer of the threonylcarbamoyl moiety of threonylcarbamoyl-AMP (TC-AMP) to the N6 group of A37, together with TsaE and TsaB. TsaD likely plays a direct catalytic role in this reaction. This is tRNA N6-adenosine threonylcarbamoyltransferase from Campylobacter jejuni subsp. doylei (strain ATCC BAA-1458 / RM4099 / 269.97).